The chain runs to 346 residues: Fe(3+) ions import ATP-binding protein FbpC 3 (346 aa).

An ABC transporter domain is found at 5-235; the sequence is LEVDGVDKSF…PIDVATAEFI (231 aa). 37–44 is a binding site for ATP; that stretch reads GPSGCGKT.

This sequence belongs to the ABC transporter superfamily. Fe(3+) ion importer (TC 3.A.1.10) family. In terms of assembly, the complex is composed of two ATP-binding proteins (FbpC), two transmembrane proteins (FbpB) and a solute-binding protein (FbpA).

It is found in the cell membrane. It catalyses the reaction Fe(3+)(out) + ATP + H2O = Fe(3+)(in) + ADP + phosphate + H(+). Part of the ABC transporter complex FbpABC involved in Fe(3+) ions import. Responsible for energy coupling to the transport system. This is Fe(3+) ions import ATP-binding protein FbpC 3 from Rhodococcus jostii (strain RHA1).